The sequence spans 150 residues: Ribonuclease HI (150 aa).

The 142-residue stretch at 1–142 folds into the RNase H type-1 domain; that stretch reads MSDSVELFTD…ADQLANRGVD (142 aa). Mg(2+) is bound by residues aspartate 10, glutamate 48, aspartate 70, and aspartate 134.

The protein belongs to the RNase H family. In terms of assembly, monomer. Mg(2+) is required as a cofactor.

The protein localises to the cytoplasm. It catalyses the reaction Endonucleolytic cleavage to 5'-phosphomonoester.. Endonuclease that specifically degrades the RNA of RNA-DNA hybrids. The protein is Ribonuclease HI of Pseudomonas syringae pv. tomato (strain ATCC BAA-871 / DC3000).